Consider the following 537-residue polypeptide: 5,6-dihydroxyindole-2-carboxylic acid oxidase (537 aa).

A signal peptide spans 1-24; sequence MSAPKLLSLGCIFFPLLLFQQARA. Residues 25–477 are Lumenal, melanosome-facing; the sequence is QFPRQCATVE…WPSREFSVPE (453 aa). Cystine bridges form between C30/C41, C42/C65, C56/C99, C101/C110, and C113/C122. Residues N96 and N104 are each glycosylated (N-linked (GlcNAc...) asparagine). A glycan (N-linked (GlcNAc...) asparagine) is linked at N181. H192, H215, and H224 together coordinate Zn(2+). 2 disulfide bridges follow: C258-C261 and C290-C303. N-linked (GlcNAc...) asparagine glycosylation is found at N304 and N350. The Zn(2+) site is built by H377 and H381. Residue N385 is glycosylated (N-linked (GlcNAc...) asparagine). H404 is a Zn(2+) binding site. The chain crosses the membrane as a helical span at residues 478 to 501; the sequence is IIAIAVVGALLLVALIFGTASYLI. Residues 502–537 lie on the Cytoplasmic side of the membrane; the sequence is RARRSMDEANQPLLTDQYQCYAEEYEKLQNPNQSVV.

Belongs to the tyrosinase family. In terms of assembly, monomer. Interacts with ATP7A. Interacts with SLC45A2. The cofactor is Cu(2+). It depends on Zn(2+) as a cofactor. Post-translationally, glycosylated. In terms of tissue distribution, pigment cells.

Its subcellular location is the melanosome membrane. It catalyses the reaction 2 5,6-dihydroxyindole-2-carboxylate + O2 = 2 indole-5,6-quinone-2-carboxylate + 2 H2O. The protein operates within pigment biosynthesis; melanin biosynthesis. Its activity is regulated as follows. The activity depends critically on the nature of the bound metal ion. Catalyzes the oxidation of 5,6-dihydroxyindole-2-carboxylic acid (DHICA) in the presence of bound Cu(2+) ions, but lacks activity in the presence of bound Zn(2+) ions. Functionally, plays a role in melanin biosynthesis. Catalyzes the oxidation of 5,6-dihydroxyindole-2-carboxylic acid (DHICA) into indole-5,6-quinone-2-carboxylic acid in the presence of bound Cu(2+) ions, but not in the presence of Zn(2+). May regulate or influence the type of melanin synthesized. Also to a lower extent, capable of hydroxylating tyrosine and producing melanin. In Homo sapiens (Human), this protein is 5,6-dihydroxyindole-2-carboxylic acid oxidase.